The following is a 474-amino-acid chain: 3-isopropylmalate dehydratase large subunit (474 aa).

The [4Fe-4S] cluster site is built by Cys-355, Cys-415, and Cys-418.

The protein belongs to the aconitase/IPM isomerase family. LeuC type 1 subfamily. As to quaternary structure, heterodimer of LeuC and LeuD. Requires [4Fe-4S] cluster as cofactor.

The enzyme catalyses (2R,3S)-3-isopropylmalate = (2S)-2-isopropylmalate. It participates in amino-acid biosynthesis; L-leucine biosynthesis; L-leucine from 3-methyl-2-oxobutanoate: step 2/4. Catalyzes the isomerization between 2-isopropylmalate and 3-isopropylmalate, via the formation of 2-isopropylmaleate. In Shewanella sp. (strain ANA-3), this protein is 3-isopropylmalate dehydratase large subunit.